Consider the following 250-residue polypeptide: Methionine aminopeptidase (250 aa).

H77 is a binding site for substrate. A divalent metal cation-binding residues include D95, D106, and H169. H176 is a substrate binding site. Positions 202 and 233 each coordinate a divalent metal cation.

This sequence belongs to the peptidase M24A family. Methionine aminopeptidase type 1 subfamily. As to quaternary structure, monomer. Co(2+) serves as cofactor. The cofactor is Zn(2+). Requires Mn(2+) as cofactor. It depends on Fe(2+) as a cofactor.

It carries out the reaction Release of N-terminal amino acids, preferentially methionine, from peptides and arylamides.. Removes the N-terminal methionine from nascent proteins. The N-terminal methionine is often cleaved when the second residue in the primary sequence is small and uncharged (Met-Ala-, Cys, Gly, Pro, Ser, Thr, or Val). Requires deformylation of the N(alpha)-formylated initiator methionine before it can be hydrolyzed. This is Methionine aminopeptidase from Clostridium acetobutylicum (strain ATCC 824 / DSM 792 / JCM 1419 / IAM 19013 / LMG 5710 / NBRC 13948 / NRRL B-527 / VKM B-1787 / 2291 / W).